The following is a 463-amino-acid chain: MENTLVKSLYRDTDKYAGQTVQVSGWIRNLRDSKAFGFIELNDGSFFKSVQIVFDTELDNFKEIAKLPLSSSVKVEGKVIVTPGAKQPFEIKAEKIDIEGLSDSDYPLQKKRHTFEYLRTIAHLRPRTNAFSATFRVRSIAAFAIHQFFQERGFVHVHTPIITGSDTEGAGEMFRVTTQDLNNVPKGEDGQVDESKDFFGKETNLTVSGQLNAEAYALAFRDVYTFGPTFRAENSNTTRHAAEFWMVEPEIAFAELGDVMNLTEDMLKYAMKYVLEHAPEEMEFFNSFVDKTVLERMNNVINSDFGRITYTEAIKVLQESGADFKYPVEWGIDLQTEHERYLSEEIFKRPVFVTDYPKDIKAFYMRLNDDGKTVAATDLLVPGIGELIGGSQREERMDVLVDRIKELGMNEEDYWWYLELRKYGGTKHAGFGLGFERFLMYITGMANIRDVIPFPRTPGSSEF.

Belongs to the class-II aminoacyl-tRNA synthetase family. Homodimer.

The protein localises to the cytoplasm. It catalyses the reaction tRNA(Asn) + L-asparagine + ATP = L-asparaginyl-tRNA(Asn) + AMP + diphosphate + H(+). The sequence is that of Asparagine--tRNA ligase from Bacillus cereus (strain ATCC 10987 / NRS 248).